Consider the following 422-residue polypeptide: O-methyltransferase kk1A (422 aa).

Residue Asp277 participates in S-adenosyl-L-methionine binding. His320 functions as the Proton acceptor in the catalytic mechanism.

This sequence belongs to the class I-like SAM-binding methyltransferase superfamily. Cation-independent O-methyltransferase family.

It participates in secondary metabolite biosynthesis. O-methyltransferase; part of the gene cluster that mediates the biosynthesis of KK-1, a novel cyclic depsipeptide with 10 residues which is a promising active compound with high activity against many plant pathogens, especially Botrytis cinerea. Within the pathway, kk1A is responsible for the O-methylation of tyrosine as a free amino acid before its activation as an aminoacyl-AMP by the corresponding A domain of kk1B. The nonribosomal peptide synthetase (NRPS) kk1B catalyzes the elongation and cyclization of the decapeptide chain composed of 1 D-lactic acid residue (D-Lac), 1 pipecolic acid residue (Pip), 1 aspartic acid residue (Asp), 1 isoleucine residue (Ile), 1 glycine residue (Gly), 1 tyrosine residue (Tyr) and 4 valine residues (Val). The Asp, Ile and 3 Val residues are N-methylated by the 5 methyltransferase domains from the NRPS (found in modules 3, 5, 6, 7 and 9), whereas the Tyr residue is O-methylated by the cluster encoded O-methyltransferase kk1A. The thioesterase kk1J is likely to be involved in the corrective mechanism of peptide chain synthesis. The D-lactate dehydrogenase kk1H is involved in the synthesis of D-lactic acid from pyruvic acid, which is recognized by the A domain of the first kk1B module. The pyrroline-5-carboxylate reductase kk1I is involved in the synthesis of the L-pipecolic acid residue of KK-1 from delta-1-pyrroline-5-carboxylate (P5C), a metabolic intermediate of lysine. It is still unclear how kk1C and kk1D are involved in the production of KK-1. This is O-methyltransferase kk1A from Curvularia clavata.